A 687-amino-acid polypeptide reads, in one-letter code: MDHTQQSRKAAEAQPSRSKQTRFCDGFKLFLAALSFSYICKALGGVVMKSSITQIERRFDIPSSISGLIDGGFEIGNLLVIVFVSYFGSKLHRPKLIGIGCFIMGIGSILTALPHFFMGYYKYAKENDIGSLGNSTLTCFINQMTSPTGPSPEIVEKGCEKGLKSHMWIYVLMGNMLRGIGETPIVPLGISYLDDFAKEGHTSMHLGTLHTIAMIGPILGFIMSSVFAKIYVDVGYVDLNSVRITPNDARWVGAWWLSFIVNGLLCITSSIPFFFLPKIPKRSQEERKNSVSLHAPKTDEEKKHMTNLTKQEEQDPSNMTGFLRSLRSILTNEIYVIFLILTLLQVSGFIGSFTYLFKFIEQQFGRTASQANFLLGIITIPTMATAMFLGGYIVKKFKLTSVGIAKFVFFTSSVAYAFQFLYFPLLCENKPFAGLTLTYDGMNPVDSHIDVPLSYCNSDCSCDKNQWEPICGENGVTYISPCLAGCKSFRGDKKPNNTEFYDCSCISNSGNNSAHLGECPRYKCKTNYYFYIILQVTVSFFTAMGSPSLILILMKSVQPELKSLAMGFHSLIIRALGGILAPIYYGAFIDRTCIKWSVTSCGKRGACRLYNSRLFGFSYLGLNLALKTPPLFLYVVLIYFTKRKYKRNDNKTLENGRQFTDEGNPDSVNKNGYYCVPYDEQSNETPL.

At 1–28 (MDHTQQSRKAAEAQPSRSKQTRFCDGFK) the chain is on the cytoplasmic side. The helical transmembrane segment at 29–48 (LFLAALSFSYICKALGGVVM) threads the bilayer. The Extracellular portion of the chain corresponds to 49–67 (KSSITQIERRFDIPSSISG). Residues 68 to 88 (LIDGGFEIGNLLVIVFVSYFG) traverse the membrane as a helical segment. Over 89-94 (SKLHRP) the chain is Cytoplasmic. The chain crosses the membrane as a helical span at residues 95–119 (KLIGIGCFIMGIGSILTALPHFFMG). Residues 120-165 (YYKYAKENDIGSLGNSTLTCFINQMTSPTGPSPEIVEKGCEKGLKS) lie on the Extracellular side of the membrane. N-linked (GlcNAc...) asparagine glycosylation occurs at Asn-134. The chain crosses the membrane as a helical span at residues 166 to 194 (HMWIYVLMGNMLRGIGETPIVPLGISYLD). The Cytoplasmic portion of the chain corresponds to 195 to 213 (DFAKEGHTSMHLGTLHTIA). The helical transmembrane segment at 214 to 234 (MIGPILGFIMSSVFAKIYVDV) threads the bilayer. Over 235 to 252 (GYVDLNSVRITPNDARWV) the chain is Extracellular. The helical transmembrane segment at 253–277 (GAWWLSFIVNGLLCITSSIPFFFLP) threads the bilayer. The Cytoplasmic segment spans residues 278-328 (KIPKRSQEERKNSVSLHAPKTDEEKKHMTNLTKQEEQDPSNMTGFLRSLRS). The tract at residues 286–311 (ERKNSVSLHAPKTDEEKKHMTNLTKQ) is disordered. Phosphoserine is present on residues Ser-290 and Ser-292. The helical transmembrane segment at 329–350 (ILTNEIYVIFLILTLLQVSGFI) threads the bilayer. The Extracellular portion of the chain corresponds to 351–370 (GSFTYLFKFIEQQFGRTASQ). Residues 371 to 394 (ANFLLGIITIPTMATAMFLGGYIV) traverse the membrane as a helical segment. Residues 395–398 (KKFK) lie on the Cytoplasmic side of the membrane. The chain crosses the membrane as a helical span at residues 399–422 (LTSVGIAKFVFFTSSVAYAFQFLY). The Extracellular segment spans residues 423-531 (FPLLCENKPF…YKCKTNYYFY (109 aa)). Residues 450-507 (DVPLSYCNSDCSCDKNQWEPICGENGVTYISPCLAGCKSFRGDKKPNNTEFYDCSCIS) enclose the Kazal-like domain. 3 cysteine pairs are disulfide-bonded: Cys-456–Cys-486, Cys-462–Cys-482, and Cys-471–Cys-505. Residues Asn-496 and Asn-511 are each glycosylated (N-linked (GlcNAc...) asparagine). Residues 532–554 (IILQVTVSFFTAMGSPSLILILM) form a helical membrane-spanning segment. Over 555 to 563 (KSVQPELKS) the chain is Cytoplasmic. The helical transmembrane segment at 564-589 (LAMGFHSLIIRALGGILAPIYYGAFI) threads the bilayer. The Extracellular portion of the chain corresponds to 590 to 623 (DRTCIKWSVTSCGKRGACRLYNSRLFGFSYLGLN). A helical membrane pass occupies residues 624-641 (LALKTPPLFLYVVLIYFT). At 642-687 (KRKYKRNDNKTLENGRQFTDEGNPDSVNKNGYYCVPYDEQSNETPL) the chain is on the cytoplasmic side. At Thr-660 the chain carries Phosphothreonine. Position 667 is a phosphoserine (Ser-667).

The protein belongs to the organo anion transporter (TC 2.A.60) family. As to expression, liver specific. Expression is highest in central perivenous hepatocytes and lowest in the periportal region. Isoform 1 predominates. Not detected in heart, brain, kidney, skeletal muscle, lung, testis or spleen.

It localises to the basolateral cell membrane. The catalysed reaction is estrone 3-sulfate(out) = estrone 3-sulfate(in). It catalyses the reaction taurocholate(out) = taurocholate(in). It carries out the reaction prostaglandin E2(out) = prostaglandin E2(in). The enzyme catalyses L-thyroxine(out) = L-thyroxine(in). Mediates the Na(+)-independent uptake of organic anions such as taurochlate, bromosulfophthalein and steroid conjugates (estrone 3-sulfate, 17-beta-glucuronosyl estradiol, dehydroepiandrosterone sulfate). Also transports prostaglandin E2 and L-thyroxine (T4). Shows a pH-sensitive substrate specificity which may be ascribed to the protonation state of the binding site and leads to a stimulation of substrate transport in an acidic microenvironment. Hydrogencarbonate/HCO3(-) acts as the probable counteranion that exchanges for organic anions. This chain is Solute carrier organic anion transporter family member 1B2 (Slco1b2), found in Rattus norvegicus (Rat).